A 193-amino-acid chain; its full sequence is MFEFITDEDERGQVGIGTLIVFIAMVLVAAIAAGVLINTAGYLQSKGSATGEEASAQVSNRINIVSAYGNVNNEKVDYVNLTVRQAAGADNINLTKSTIQWIGPDRATTLTYSSNSPSSLGENFTTESIKGSSADVLVDQSDRIKVIMYASGVSSNLGAGDEVQLTVTTQYGSKTTYWAQVPESLKDKNAVTL.

The propeptide occupies 1–12 (MFEFITDEDERG).

Belongs to the archaeal flagellin family. In terms of processing, glycosylated.

It is found in the archaeal flagellum. Functionally, flagellin is the subunit protein which polymerizes to form the filaments of archaeal flagella. The chain is Flagellin B1 (flaB1) from Halobacterium salinarum (strain ATCC 700922 / JCM 11081 / NRC-1) (Halobacterium halobium).